Here is a 156-residue protein sequence, read N- to C-terminus: E3 ubiquitin-protein ligase RNF181 (156 aa).

The RING-type; atypical zinc-finger motif lies at 79–120; it reads CPVCLLEFEEGETVRQLPCEHLFHSACILPWLGKTNSCPLCR.

It belongs to the RNF181 family.

The catalysed reaction is S-ubiquitinyl-[E2 ubiquitin-conjugating enzyme]-L-cysteine + [acceptor protein]-L-lysine = [E2 ubiquitin-conjugating enzyme]-L-cysteine + N(6)-ubiquitinyl-[acceptor protein]-L-lysine.. It participates in protein modification; protein ubiquitination. In terms of biological role, E3 ubiquitin-protein ligase which accepts ubiquitin from an E2 ubiquitin-conjugating enzyme in the form of a thioester and then directly transfers the ubiquitin to targeted substrates. Catalyzes monoubiquitination of 26S proteasome subunit PSMC2/RPT1. This chain is E3 ubiquitin-protein ligase RNF181 (rnf181), found in Xenopus laevis (African clawed frog).